Consider the following 609-residue polypeptide: Pentatricopeptide repeat-containing protein At1g03540 (609 aa).

PPR repeat units follow at residues 25-59, 60-94, 95-126, 127-161, 162-196, 197-227, 228-263, 264-298, 299-329, 330-364, 396-426, 427-461, 462-497, and 498-532; these read SAPTKQSRILELCKLGQLTEAIRILNSTHSSEIPA, TPKLYASLLQTCNKVFSFIHGIQFHAHVVKSGLET, DRNVGNSLLSLYFKLGPGMRETRRVFDGRFVK, DAISWTSMMSGYVTGKEHVKALEVFVEMVSFGLDA, NEFTLSSAVKACSELGEVRLGRCFHGVVITHGFEW, NHFISSTLAYLYGVNREPVDARRVFDEMPEP, DVICWTAVLSAFSKNDLYEEALGLFYAMHRGKGLVP, DGSTFGTVLTACGNLRRLKQGKEIHGKLITNGIGS, NVVVESSLLDMYGKCGSVREARQVFNGMSKK, NSVSWSALLGGYCQNGEHEKAIEIFREMEEKDLYC, NVIVESALIDLYGKSGCIDSASRVYSKMSIR, NMITWNAMLSALAQNGRGEEAVSFFNDMVKKGIKP, DYISFIAILTACGHTGMVDEGRNYFVLMAKSYGIKP, and GTEHYSCMIDLLGRAGLFEEAENLLERAECRNDAS. The segment at 533 to 609 is type E motif; sequence LWGVLLGPCA…TVGQSWIDAH (77 aa).

Belongs to the PPR family. PCMP-E subfamily.

In Arabidopsis thaliana (Mouse-ear cress), this protein is Pentatricopeptide repeat-containing protein At1g03540 (PCMP-E4).